We begin with the raw amino-acid sequence, 314 residues long: Acetaldehyde dehydrogenase 4 (314 aa).

15-18 (SGNI) lines the NAD(+) pocket. Cys-133 serves as the catalytic Acyl-thioester intermediate. NAD(+)-binding positions include 164–172 (SAGPGTRAN) and Asn-292.

The protein belongs to the acetaldehyde dehydrogenase family.

The enzyme catalyses acetaldehyde + NAD(+) + CoA = acetyl-CoA + NADH + H(+). In Burkholderia lata (strain ATCC 17760 / DSM 23089 / LMG 22485 / NCIMB 9086 / R18194 / 383), this protein is Acetaldehyde dehydrogenase 4.